A 187-amino-acid polypeptide reads, in one-letter code: Adenylate kinase (187 aa).

10 to 15 serves as a coordination point for ATP; the sequence is GSGKGT. The NMP stretch occupies residues 30–59; sequence STGDLLRAEVAAGSPLGLKAKEVMARGDLV. AMP-binding positions include Thr-31, Arg-36, 57 to 59, 85 to 88, and Gln-92; these read DLV and GYPR. Positions 126 to 136 are LID; sequence GRAKAEGREDD. Arg-127 contributes to the ATP binding site. Arg-133 and Arg-144 together coordinate AMP. Residue Gly-172 coordinates ATP.

The protein belongs to the adenylate kinase family. Monomer.

The protein resides in the cytoplasm. The catalysed reaction is AMP + ATP = 2 ADP. It participates in purine metabolism; AMP biosynthesis via salvage pathway; AMP from ADP: step 1/1. Catalyzes the reversible transfer of the terminal phosphate group between ATP and AMP. Plays an important role in cellular energy homeostasis and in adenine nucleotide metabolism. This Xanthomonas campestris pv. campestris (strain 8004) protein is Adenylate kinase.